Consider the following 614-residue polypeptide: MLKLATKLAPCSRVVYAISKPSILVSANQRRFNSSTPNDTVYTSLNDENDPQRDAFFQYTWGTWLKDDKEQKQKRVTRFSIEGVNSLLAKMYDTSRETMKSSNVLTAPVWDKELKATLLPSNLDLDTMGVLNPNEKIVVTQMASIHEGKHHRVYKLDTNTQKSFVLRLPYNLDGDFYNDVRVKSEAATLDFLRLKLGMKVPKVFAYGADAQNNALRSVFTLMEFIEGDLLMKRWNPLVKDSEGSQEQLKSVLDPLADIQRRLLEVTFTKFGSLYFAHDVEESLRKDLPYKGEVDTMLVNRWKIGPSAERVFYRDGLPAEEVTKFTGPWKNAIDEVVAVADSALNSVELSLQKDLTQEQETILNRAKEVYQDFRSVAPVLFESDLTKSSLPNGTELFLPRLHVPELDPLNVVDNTAGPYLLDVEGANIKPFILHGYPVFLSYDGPKIYNVNEDVEGYSEMSPEEQRSYDVMYMRTRNQFIWEFALNARCRELVGAVAPAVKMIREPYLAAVRRGADVHHYLNVESSLLALSQMWDSYRAGHLVGAEKFPVKWAETEEAFNQKVQRHREDLIAYQTKIASAPFSATNGWVPQDMFNTLKEQGIIVQDGEDYVIKDE.

A mitochondrion-targeting transit peptide spans 1-39 (MLKLATKLAPCSRVVYAISKPSILVSANQRRFNSSTPND).

The protein belongs to the AIM9 family.

The protein resides in the mitochondrion. This is Altered inheritance of mitochondria protein 9, mitochondrial (AIM9) from Komagataella phaffii (strain GS115 / ATCC 20864) (Yeast).